The following is a 488-amino-acid chain: N-succinylglutamate 5-semialdehyde dehydrogenase (488 aa).

221 to 226 is an NAD(+) binding site; that stretch reads GSSRTG. Active-site residues include E244 and C278.

It belongs to the aldehyde dehydrogenase family. AstD subfamily.

The enzyme catalyses N-succinyl-L-glutamate 5-semialdehyde + NAD(+) + H2O = N-succinyl-L-glutamate + NADH + 2 H(+). The protein operates within amino-acid degradation; L-arginine degradation via AST pathway; L-glutamate and succinate from L-arginine: step 4/5. Its function is as follows. Catalyzes the NAD-dependent reduction of succinylglutamate semialdehyde into succinylglutamate. The polypeptide is N-succinylglutamate 5-semialdehyde dehydrogenase (Pseudomonas savastanoi pv. phaseolicola (strain 1448A / Race 6) (Pseudomonas syringae pv. phaseolicola (strain 1448A / Race 6))).